The following is a 696-amino-acid chain: DEAD-box ATP-dependent RNA helicase 7 (696 aa).

The tract at residues 1–116 is disordered; sequence MPSLPVAAAE…GDEDPADPNA (116 aa). Residues 16 to 97 are a coiled coil; it reads ESASKKSKRK…KVVVEEEEED (82 aa). Residues 27–38 are compositionally biased toward basic and acidic residues; that stretch reads KAAEVEVEASSR. A compositionally biased stretch (basic residues) spans 39 to 49; the sequence is KKEKKEKKRKA. Residues 67–77 are compositionally biased toward low complexity; it reads STSSDEPAPAA. Residues 92–112 are compositionally biased toward acidic residues; it reads EEEEEDDDEGELTASGDEDPA. Positions 115–143 match the Q motif motif; it reads NALANFRISESLREKLKSKGIKALFPIQA. The 183-residue stretch at 146-328 folds into the Helicase ATP-binding domain; that stretch reads FDLVLDGHDL…LRFLKSGKKT (183 aa). 159–166 lines the ATP pocket; the sequence is ARTGQGKT. Residues 274-277 carry the DEAD box motif; the sequence is DEAD. A Helicase C-terminal domain is found at 357-500; sequence QVIPDIIRCY…ISAPQPTDVA (144 aa). Residues 641-696 are disordered; it reads LPPLQEREQSGGSRGGGRFGNRRFSGGGGGRGGGGRGFGGGRGRGGGGGNRFNKRY. Residues 652–690 show a composition bias toward gly residues; sequence GSRGGGRFGNRRFSGGGGGRGGGGRGFGGGRGRGGGGGN.

The protein belongs to the DEAD box helicase family. DDX21/DDX50 subfamily.

It is found in the nucleus. The catalysed reaction is ATP + H2O = ADP + phosphate + H(+). The polypeptide is DEAD-box ATP-dependent RNA helicase 7 (Oryza sativa subsp. japonica (Rice)).